We begin with the raw amino-acid sequence, 1264 residues long: Ubiquitin carboxyl-terminal hydrolase usp-48 (1264 aa).

Positions 108–430 (AGLINGGNFC…ACYGLLYRRR (323 aa)) constitute a USP domain. Residue Cys117 is the Nucleophile of the active site. The Proton acceptor role is filled by His366. Disordered regions lie at residues 390–415 (IPKP…KEKY), 522–610 (AKGE…IMDT), and 630–679 (TVEV…PVSS). Composition is skewed to basic and acidic residues over residues 403-415 (KTEK…KEKY) and 532-543 (EASENEEKKKNE). Residues 516 to 547 (AQEYEVAKGEKKKKKKEASENEEKKKNEEDEA) are a coiled coil. Residues 565–575 (SEPSTSAAATE) show a composition bias toward low complexity. Polar residues-rich tracts occupy residues 587–599 (ETPN…STQV) and 663–678 (NGTN…QPVS).

This sequence belongs to the peptidase C19 family. In terms of tissue distribution, broadly expressed. Expressed in germline.

Its subcellular location is the nucleus. It is found in the chromosome. It carries out the reaction Thiol-dependent hydrolysis of ester, thioester, amide, peptide and isopeptide bonds formed by the C-terminal Gly of ubiquitin (a 76-residue protein attached to proteins as an intracellular targeting signal).. Functionally, recognizes and hydrolyzes the peptide bond at the C-terminal Gly of ubiquitin. Involved in the processing of poly-ubiquitin precursors as well as that of ubiquitinated proteins. Required post-developmentally to restrict the plasticity of epidermal cells, probably by regulating gene expression. In Caenorhabditis elegans, this protein is Ubiquitin carboxyl-terminal hydrolase usp-48.